The primary structure comprises 791 residues: Centrosomal protein of 89 kDa (791 aa).

Positions alanine 27–serine 203 are disordered. A compositionally biased stretch (pro residues) spans proline 30 to proline 45. Serine 50 carries the phosphoserine modification. Residues serine 50–threonine 62 show a composition bias toward low complexity. A compositionally biased stretch (basic and acidic residues) spans serine 75–phenylalanine 89. Polar residues predominate over residues alanine 94–asparagine 107. A compositionally biased stretch (basic and acidic residues) spans arginine 137–glutamine 161. The span at serine 181–serine 190 shows a compositional bias: low complexity. Coiled-coil stretches lie at residues serine 252–alanine 291, leucine 370–glutamate 598, and histidine 670–glutamine 737.

Its subcellular location is the cytoplasm. The protein localises to the cytosol. It is found in the cytoskeleton. It localises to the microtubule organizing center. The protein resides in the centrosome. Its subcellular location is the spindle pole. The protein localises to the centriole. It is found in the mitochondrion intermembrane space. Its function is as follows. Required for ciliogenesis. Also plays a role in mitochondrial metabolism where it may modulate complex IV activity. In Mus musculus (Mouse), this protein is Centrosomal protein of 89 kDa (Cep89).